A 309-amino-acid polypeptide reads, in one-letter code: Homoserine kinase (309 aa).

91 to 101 (PIGSGLGSSAC) contacts ATP.

This sequence belongs to the GHMP kinase family. Homoserine kinase subfamily.

It localises to the cytoplasm. It carries out the reaction L-homoserine + ATP = O-phospho-L-homoserine + ADP + H(+). It participates in amino-acid biosynthesis; L-threonine biosynthesis; L-threonine from L-aspartate: step 4/5. Functionally, catalyzes the ATP-dependent phosphorylation of L-homoserine to L-homoserine phosphate. The sequence is that of Homoserine kinase from Salmonella dublin (strain CT_02021853).